The primary structure comprises 383 residues: S-adenosylmethionine synthase (383 aa).

Position 15 (histidine 15) interacts with ATP. Position 17 (aspartate 17) interacts with Mg(2+). Glutamate 43 lines the K(+) pocket. Residues glutamate 56 and glutamine 99 each coordinate L-methionine. A flexible loop region spans residues 99 to 109; that stretch reads QSPDINQGVDR. ATP is bound by residues 164 to 166, 230 to 231, aspartate 239, 245 to 246, alanine 262, and lysine 266; these read DAK, RF, and RK. Position 239 (aspartate 239) interacts with L-methionine. Lysine 270 contacts L-methionine.

This sequence belongs to the AdoMet synthase family. In terms of assembly, homotetramer; dimer of dimers. Requires Mg(2+) as cofactor. K(+) is required as a cofactor.

Its subcellular location is the cytoplasm. The enzyme catalyses L-methionine + ATP + H2O = S-adenosyl-L-methionine + phosphate + diphosphate. Its pathway is amino-acid biosynthesis; S-adenosyl-L-methionine biosynthesis; S-adenosyl-L-methionine from L-methionine: step 1/1. Catalyzes the formation of S-adenosylmethionine (AdoMet) from methionine and ATP. The overall synthetic reaction is composed of two sequential steps, AdoMet formation and the subsequent tripolyphosphate hydrolysis which occurs prior to release of AdoMet from the enzyme. The chain is S-adenosylmethionine synthase from Shewanella oneidensis (strain ATCC 700550 / JCM 31522 / CIP 106686 / LMG 19005 / NCIMB 14063 / MR-1).